The chain runs to 273 residues: Ribosomal RNA small subunit methyltransferase A (273 aa).

Positions 18, 20, 45, 66, 91, and 113 each coordinate S-adenosyl-L-methionine.

The protein belongs to the class I-like SAM-binding methyltransferase superfamily. rRNA adenine N(6)-methyltransferase family. RsmA subfamily.

It localises to the cytoplasm. It catalyses the reaction adenosine(1518)/adenosine(1519) in 16S rRNA + 4 S-adenosyl-L-methionine = N(6)-dimethyladenosine(1518)/N(6)-dimethyladenosine(1519) in 16S rRNA + 4 S-adenosyl-L-homocysteine + 4 H(+). Functionally, specifically dimethylates two adjacent adenosines (A1518 and A1519) in the loop of a conserved hairpin near the 3'-end of 16S rRNA in the 30S particle. May play a critical role in biogenesis of 30S subunits. In Enterobacter sp. (strain 638), this protein is Ribosomal RNA small subunit methyltransferase A.